Here is a 375-residue protein sequence, read N- to C-terminus: 4,4'-diaponeurosporenoate glycosyltransferase (375 aa).

Transmembrane regions (helical) follow at residues 3-23 (WLSR…ALIF), 164-184 (FYEG…NVFS), 277-297 (IMTA…GLCL), and 330-350 (FSNL…KIFI).

Belongs to the glycosyltransferase 2 family. CrtQ subfamily.

The protein localises to the cell membrane. Its pathway is carotenoid biosynthesis; staphyloxanthin biosynthesis; staphyloxanthin from farnesyl diphosphate: step 4/5. Catalyzes the glycosylation of 4,4'-diaponeurosporenoate, i.e. the esterification of glucose at the C1'' position with the carboxyl group of 4,4'-diaponeurosporenic acid, to form glycosyl-4,4'-diaponeurosporenoate. This is a step in the biosynthesis of staphyloxanthin, an orange pigment present in most staphylococci strains. In Staphylococcus aureus (strain Mu50 / ATCC 700699), this protein is 4,4'-diaponeurosporenoate glycosyltransferase (crtQ).